A 352-amino-acid chain; its full sequence is Homoserine O-acetyltransferase (352 aa).

Residues 37–330 (NAVLVCHALT…APHGHDTFLI (294 aa)) enclose the AB hydrolase-1 domain. The Nucleophile role is filled by S133. R206 contributes to the substrate binding site. Catalysis depends on residues D296 and H325. D326 contacts substrate.

It belongs to the AB hydrolase superfamily. MetX family. As to quaternary structure, homodimer.

Its subcellular location is the cytoplasm. It catalyses the reaction L-homoserine + acetyl-CoA = O-acetyl-L-homoserine + CoA. It participates in amino-acid biosynthesis; L-methionine biosynthesis via de novo pathway; O-acetyl-L-homoserine from L-homoserine: step 1/1. In terms of biological role, transfers an acetyl group from acetyl-CoA to L-homoserine, forming acetyl-L-homoserine. The polypeptide is Homoserine O-acetyltransferase (Salinibacter ruber (strain DSM 13855 / M31)).